Reading from the N-terminus, the 312-residue chain is Acetyl-coenzyme A carboxylase carboxyl transferase subunit beta (312 aa).

A CoA carboxyltransferase N-terminal domain is found at 24–293 (LWIKCPDSGQ…VEHAKPAPQL (270 aa)). Positions 286–312 (HAKPAPQLPPPAKPAETAEAPAVATSA) are disordered. Low complexity predominate over residues 299–312 (PAETAEAPAVATSA).

This sequence belongs to the AccD/PCCB family. Acetyl-CoA carboxylase is a heterohexamer composed of biotin carboxyl carrier protein (AccB), biotin carboxylase (AccC) and two subunits each of ACCase subunit alpha (AccA) and ACCase subunit beta (AccD).

The protein localises to the cytoplasm. It carries out the reaction N(6)-carboxybiotinyl-L-lysyl-[protein] + acetyl-CoA = N(6)-biotinyl-L-lysyl-[protein] + malonyl-CoA. Its pathway is lipid metabolism; malonyl-CoA biosynthesis; malonyl-CoA from acetyl-CoA: step 1/1. Its function is as follows. Component of the acetyl coenzyme A carboxylase (ACC) complex. Biotin carboxylase (BC) catalyzes the carboxylation of biotin on its carrier protein (BCCP) and then the CO(2) group is transferred by the transcarboxylase to acetyl-CoA to form malonyl-CoA. The chain is Acetyl-coenzyme A carboxylase carboxyl transferase subunit beta from Bradyrhizobium sp. (strain ORS 278).